The following is a 145-amino-acid chain: Protein H2A.5 (145 aa).

The tract at residues 118–145 (SPAAAEKEAKSQKAAAKSPKKKTAATKE) is disordered. The SPKK motif signature appears at 135–138 (SPKK). The segment covering 135-145 (SPKKKTAATKE) has biased composition (basic residues).

It belongs to the histone H2A family. In terms of assembly, the nucleosome is a histone octamer containing two molecules each of H2A, H2B, H3 and H4 assembled in one H3-H4 heterotetramer and two H2A-H2B heterodimers. The octamer wraps approximately 147 bp of DNA. As to expression, abundant in meristematic tissues.

Its subcellular location is the nucleus. The protein resides in the chromosome. Core component of nucleosome. Nucleosomes wrap and compact DNA into chromatin, limiting DNA accessibility to the cellular machineries which require DNA as a template. Histones thereby play a central role in transcription regulation, DNA repair, DNA replication and chromosomal stability. DNA accessibility is regulated via a complex set of post-translational modifications of histones, also called histone code, and nucleosome remodeling. The chain is Protein H2A.5 (H2A-2) from Triticum aestivum (Wheat).